The primary structure comprises 68 residues: Large ribosomal subunit protein bL35 (68 aa).

Belongs to the bacterial ribosomal protein bL35 family.

This is Large ribosomal subunit protein bL35 from Fusobacterium nucleatum subsp. nucleatum (strain ATCC 25586 / DSM 15643 / BCRC 10681 / CIP 101130 / JCM 8532 / KCTC 2640 / LMG 13131 / VPI 4355).